We begin with the raw amino-acid sequence, 796 residues long: Nuclear GTPase SLIP-GC (796 aa).

Positions Met-1–Glu-22 are enriched in basic and acidic residues. The interval Met-1–Arg-35 is disordered. Gly-107–Ser-114 is a binding site for GTP. 2 coiled-coil regions span residues Ser-158 to Asp-185 and Lys-745 to Lys-775.

Expressed in germinal center B-cell and in lymphomas derived from germinal center B-cell.

It is found in the nucleus speckle. In terms of biological role, nuclear GTPase found in germinal center B-cells, where it may inhibit function of the activation-induced cytidine deaminase AICDA. Reduces somatic hypermutation in B-cells which may enhance genome stability. The sequence is that of Nuclear GTPase SLIP-GC (NUGGC) from Homo sapiens (Human).